Consider the following 266-residue polypeptide: uncharacterized protein (266 aa).

This sequence belongs to the chlamydial CPn_0087/CT3_09/TC_0583 family.

This is an uncharacterized protein from Chlamydia muridarum (strain MoPn / Nigg).